A 568-amino-acid polypeptide reads, in one-letter code: Lipoprotein LpqB (568 aa).

The signal sequence occupies residues M1–G23. Residue C24 is the site of N-palmitoyl cysteine attachment. C24 carries the S-diacylglycerol cysteine lipid modification.

This sequence belongs to the LpqB lipoprotein family.

Its subcellular location is the cell membrane. This chain is Lipoprotein LpqB, found in Corynebacterium glutamicum (strain R).